Reading from the N-terminus, the 639-residue chain is Probable methyltransferase PMT18 (639 aa).

At 1 to 19 (MAKENSSHSLAEAKRKRLT) the chain is on the cytoplasmic side. Residues 20–42 (WILCVSGLCILSYVLGSWQTNTV) traverse the membrane as a helical; Signal-anchor for type II membrane protein segment. The tract at residues 41–86 (TVPTSSSEAYSRMGCDETSTTTRAQTTQTQTNPSSDDTSSSLSSSE) is disordered. The Lumenal portion of the chain corresponds to 43–639 (PTSSSEAYSR…VKSYWTGPSS (597 aa)). Positions 58-85 (TSTTTRAQTTQTQTNPSSDDTSSSLSSS) are enriched in low complexity. Asn-104 and Asn-427 each carry an N-linked (GlcNAc...) asparagine glycan.

This sequence belongs to the methyltransferase superfamily.

The protein resides in the endoplasmic reticulum membrane. The protein is Probable methyltransferase PMT18 of Arabidopsis thaliana (Mouse-ear cress).